A 405-amino-acid chain; its full sequence is Tyrosine--tRNA ligase (405 aa).

Residue Tyr35 participates in L-tyrosine binding. Residues 40–49 carry the 'HIGH' region motif; the sequence is ATSSSLHIGH. 2 residues coordinate L-tyrosine: Tyr166 and Gln170. A 'KMSKS' region motif is present at residues 226 to 230; that stretch reads KMGKS. Lys229 is an ATP binding site. The region spanning 340 to 405 is the S4 RNA-binding domain; that stretch reads ILLVDLMLDS…GKKKFLRIVI (66 aa).

Belongs to the class-I aminoacyl-tRNA synthetase family. TyrS type 1 subfamily. As to quaternary structure, homodimer.

The protein localises to the cytoplasm. It catalyses the reaction tRNA(Tyr) + L-tyrosine + ATP = L-tyrosyl-tRNA(Tyr) + AMP + diphosphate + H(+). Functionally, catalyzes the attachment of tyrosine to tRNA(Tyr) in a two-step reaction: tyrosine is first activated by ATP to form Tyr-AMP and then transferred to the acceptor end of tRNA(Tyr). The sequence is that of Tyrosine--tRNA ligase from Borreliella burgdorferi (strain ATCC 35210 / DSM 4680 / CIP 102532 / B31) (Borrelia burgdorferi).